The chain runs to 367 residues: Glutamate 5-kinase (367 aa).

Lysine 10 provides a ligand contact to ATP. Residues serine 50, aspartate 137, and asparagine 149 each coordinate substrate. ATP-binding positions include 169 to 170 (TD) and 211 to 217 (TGGMSTK). The PUA domain maps to 275-353 (AGEITVDEGA…QQIDAILGYE (79 aa)).

This sequence belongs to the glutamate 5-kinase family.

Its subcellular location is the cytoplasm. The catalysed reaction is L-glutamate + ATP = L-glutamyl 5-phosphate + ADP. It participates in amino-acid biosynthesis; L-proline biosynthesis; L-glutamate 5-semialdehyde from L-glutamate: step 1/2. In terms of biological role, catalyzes the transfer of a phosphate group to glutamate to form L-glutamate 5-phosphate. The protein is Glutamate 5-kinase of Salmonella arizonae (strain ATCC BAA-731 / CDC346-86 / RSK2980).